The chain runs to 1873 residues: Kinesin-related protein 8 (1873 aa).

The region spanning 13 to 413 (CVRVALRVRP…LKYAYRARNI (401 aa)) is the Kinesin motor domain. 93-100 (GQTGSGKT) lines the ATP pocket. Disordered stretches follow at residues 231–302 (NSPV…DERN), 463–567 (VSIP…SPTS), 778–797 (LDKD…YYED), 841–891 (KIDS…ARKT), 930–1008 (KQRV…TEQL), 1179–1207 (PQPL…QRSS), 1244–1267 (LPSQ…STSS), 1328–1360 (TTTT…NNSS), and 1403–1467 (NNIT…PRPD). Low complexity predominate over residues 232-247 (SPVTSSSTSSTSTSSS). Residues 280–297 (IDEDEEDDEEDEDDDIMS) show a composition bias toward acidic residues. Over residues 473 to 567 (TPTLTNNNNN…NNTATPSPTS (95 aa)) the composition is skewed to low complexity. Positions 715–933 (FENDSEELSD…KEIEVHKQRV (219 aa)) form a coiled coil. Composition is skewed to low complexity over residues 937–1005 (INSK…TPTT), 1182–1200 (LQSQ…NSEQ), 1244–1254 (LPSQQQLSSSQ), 1348–1358 (NNTNNNNNNNN), and 1423–1454 (SLQS…SNNN). WD repeat units lie at residues 1506-1546 (GHDG…NMLD), 1548-1587 (SSPG…NTNL), 1589-1628 (IFKT…KPLK), 1636-1673 (HHTG…LAQK), and 1677-1714 (PHHD…NLIN). The segment at 1758–1780 (NNNNNNSSNNNKSSSAPSSTTSS) is disordered. 2 WD repeats span residues 1805-1842 (AHND…NSLL) and 1844-1873 (GHES…IWKC).

The protein belongs to the TRAFAC class myosin-kinesin ATPase superfamily. Kinesin family.

It localises to the cytoplasm. The protein localises to the cytoskeleton. Microtubule-associated force-producing protein that plays a role in organelle transport. Its motor activity is directed toward the microtubule's plus end. Cooperates with kif10 and dynein to organize interphase microtubules. In Dictyostelium discoideum (Social amoeba), this protein is Kinesin-related protein 8 (kif8).